A 3460-amino-acid chain; its full sequence is MERSGWARQTFLLALLLGATLRARAAAGYYPRFSPFFFLCTHHGELEGDGEQGEVLISLHIAGNPTYYVPGQEYHVTISTSTFFDGLLVTGLYTSTSVQASQSIGGSSAFGFGIMSDHQFGNQFMCSVVASHVSHLPTTNLSFIWIAPPAGTGCVNFMATATHRGQVIFKDALAQQLCEQGAPTDVTVHPHLAEIHSDSIILRDDFDSYHQLQLNPNIWVECNNCETGEQCGAIMHGNAVTFCEPYGPRELITTGLNTTTASVLQFSIGSGSCRFSYSDPSIIVLYAKNNSADWIQLEKIRAPSNVSTIIHILYLPEDAKGENVQFQWKQENLRVGEVYEACWALDNILIINSAHRQVVLEDSLDPVDTGNWLFFPGATVKHSCQSDGNSIYFHGNEGSEFNFATTRDVDLSTEDIQEQWSEEFESQPTGWDVLGAVIGTECGTIESGLSMVFLKDGERKLCTPSMDTTGYGNLRFYFVMGGICDPGNSHENDIILYAKIEGRKEHITLDTLSYSSYKVPSLVSVVINPELQTPATKFCLRQKNHQGHNRNVWAVDFFHVLPVLPSTMSHMIQFSINLGCGTHQPGNSVSLEFSTNHGRSWSLLHTECLPEICAGPHLPHSTVYSSENYSGWNRITIPLPNAALTRNTRIRWRQTGPILGNMWAIDNVYIGPSCLKFCSGRGQCTRHGCKCDPGFSGPACEMASQTFPMFISESFGSSRLSSYHNFYSIRGAEVSFGCGVLASGKALVFNKDGRRQLITSFLDSSQSRFLQFTLRLGSKSVLSTCRAPDQPGEGVLLHYSYDNGITWKLLEHYSYLSYHEPRIISVELPGDAKQFGIQFRWWQPYHSSQREDVWAIDEIIMTSVLFNSISLDFTNLVEVTQSLGFYLGNVQPYCGHDWTLCFTGDSKLASSMRYVETQSMQIGASYMIQFSLVMGCGQKYTPHMDNQVKLEYSTNHGLTWHLVQEECLPSMPSCQEFTSASIYHASEFTQWRRVIVLLPQKTWSSATRFRWSQSYYTAQDEWALDSIYIGQQCPNMCSGHGSCDHGICRCDQGYQGTECHPEAALPSTIMSDFENQNGWESDWQEVIGGEIVKPEQGCGVISSGSSLYFSKAGKRQLVSWDLDTSWVDFVQFYIQIGGESASCNKPDSREEGVLLQYSNNGGIQWHLLAEMYFSDFSKPRFVYLELPAAAKTPCTRFRWWQPVFSGEDYDQWAVDDIIILSEKQKQIIPVINPTLPQNFYEKPAFDYPMNQMSVWLMLANEGMVKNETFCAATPSAMIFGKSDGDRFAVTRDLTLKPGYVLQFKLNIGCANQFSSTAPVLLQYSHDAGMSWFLVKEGCYPASAGKGCEGNSRELSEPTMYHTGDFEEWTRITIVIPRSLASSKTRFRWIQESSSQKNVPPFGLDGVYISEPCPSYCSGHGDCISGVCFCDLGYTAAQGTCVSNVPNHNEMFDRFEGKLSPLWYKITGAQVGTGCGTLNDGKSLYFNGPGKREARTVPLDTRNIRLVQFYIQIGSKTSGITCIKPRTRNEGLIVQYSNDNGILWHLLRELDFMSFLEPQIISIDLPQDAKTPATAFRWWQPQHGKHSAQWALDDVLIGMNDSSQTGFQDKFDGSIDLQANWYRIQGGQVDIDCLSMDTALIFTENIGKPRYAETWDFHVSASTFLQFEMSMGCSKPFSNSHSVQLQYSLNNGKDWHLVTEECVPPTIGCLHYTESSIYTSERFQNWKRITVYLPLSTISPRTRFRWIQANYTVGADSWAIDNVVLASGCPWMCSGRGICDAGRCVCDRGFGGPYCVPVVPLPSILKDDFNGNLHPDLWPEVYGAERGNLNGETIKSGTSLIFKGEGLRMLISRDLDCTNTMYVQFSLRFIAKSTPERSHSILLQFSISGGITWHLMDEFYFPQTTNILFINVPLPYTAQTNATRFRLWQPYNNGKKEEIWIVDDFIIDGNNVNNPVMLLDTFDFGPREDNWFFYPGGNIGLYCPYSSKGAPEEDSAMVFVSNEVGEHSITTRDLNVNENTIIQFEINVGCSTDSSSADPVRLEFSRDFGATWHLLLPLCYHSSSHVSSLCSTEHHPSSTYYAGTMQGWRREVVHFGKLHLCGSVRFRWYQGFYPAGSQPVTWAIDNVYIGPQCEEMCNGQGSCINGTKCICDPGYSGPTCKISTKNPDFLKDDFEGQLESDRFLLMSGGKPSRKCGILSSGNNLFFNEDGLRMLMTRDLDLSHARFVQFFMRLGCGKGVPDPRSQPVLLQYSLNGGLSWSLLQEFLFSNSSNVGRYIALEIPLKARSGSTRLRWWQPSENGHFYSPWVIDQILIGGNISGNTVLEDDFTTLDSRKWLLHPGGTKMPVCGSTGDALVFIEKASTRYVVSTDVAVNEDSFLQIDFAASCSVTDSCYAIELEYSVDLGLSWHPLVRDCLPTNVECSRYHLQRILVSDTFNKWTRITLPLPPYTRSQATRFRWHQPAPFDKQQTWAIDNVYIGDGCIDMCSGHGRCIQGNCVCDEQWGGLYCDDPETSLPTQLKDNFNRAPSSQNWLTVNGGKLSTVCGAVASGMALHFSGGCSRLLVTVDLNLTNAEFIQFYFMYGCLITPNNRNQGVLLEYSVNGGITWNLLMEIFYDQYSKPGFVNILLPPDAKEIATRFRWWQPRHDGLDQNDWAIDNVLISGSADQRTVMLDTFSSAPVPQHERSPADAGPVGRIAFDMFMEDKTSVNEHWLFHDDCTVERFCDSPDGVMLCGSHDGREVYAVTHDLTPTEGWIMQFKISVGCKVSEKIAQNQIHVQYSTDFGVSWNYLVPQCLPADPKCSGSVSQPSVFFPTKGWKRITYPLPESLVGNPVRFRFYQKYSDMQWAIDNFYLGPGCLDNCRGHGDCLREQCICDPGYSGPNCYLTHTLKTFLKERFDSEEIKPDLWMSLEGGSTCTECGILAEDTALYFGGSTVRQAVTQDLDLRGAKFLQYWGRIGSENNMTSCHRPICRKEGVLLDYSTDGGITWTLLHEMDYQKYISVRHDYILLPEDALTNTTRLRWWQPFVISNGIVVSGVERAQWALDNILIGGAEINPSQLVDTFDDEGTSHEENWSFYPNAVRTAGFCGNPSFHLYWPNKKKDKTHNALSSRELIIQPGYMMQFKIVVGCEATSCGDLHSVMLEYTKDARSDSWQLVQTQCLPSSSNSIGCSPFQFHEATIYNSVNSSSWKRITIQLPDHVSSSATQFRWIQKGEETEKQSWAIDHVYIGEACPKLCSGHGYCTTGAICICDESFQGDDCSVFSHDLPSYIKDNFESARVTEANWETIQGGVIGSGCGQLAPYAHGDSLYFNGCQIRQAATKPLDLTRASKIMFVLQIGSMSQTDSCNSDLSGPHAVDKAVLLQYSVNNGITWHVIAQHQPKDFTQAQRVSYNVPLEARMKGVLLRWWQPRHNGTGHDQWALDHVEVVLVSTRKQNYMMNFSRQHGLRHFYNRRRRSLRRYP.

A signal peptide spans 1–25; sequence MERSGWARQTFLLALLLGATLRARA. Residues 26 to 190 form the Reelin domain; sequence AAGYYPRFSP…GAPTDVTVHP (165 aa). Cys40 and Cys126 are joined by a disulfide. Asn140 is a glycosylation site (N-linked (GlcNAc...) asparagine). A disulfide bridge links Cys154 with Cys178. 3 N-linked (GlcNAc...) asparagine glycosylation sites follow: Asn257, Asn289, and Asn305. A disulfide bridge connects residues Cys539 and Cys580. The stretch at 592–603 is one BNR 1 repeat; sequence EFSTNHGRSWSL. A disulfide bond links Cys608 and Cys613. Asn628 carries an N-linked (GlcNAc...) asparagine glycan. An EGF-like 1 domain is found at 670-701; sequence IGPSCLKFCSGRGQCTRHGCKCDPGFSGPACE. Cystine bridges form between Cys674-Cys684 and Cys691-Cys700. The BNR 2 repeat unit spans residues 798-809; that stretch reads HYSYDNGITWKL. Cys894 and Cys936 are disulfide-bonded. Residues 951–962 form a BNR 3 repeat; that stretch reads EYSTNHGLTWHL. 3 cysteine pairs are disulfide-bonded: Cys967-Cys974, Cys1033-Cys1043, and Cys1050-Cys1059. One can recognise an EGF-like 2 domain in the interval 1029 to 1060; the sequence is IGQQCPNMCSGHGSCDHGICRCDQGYQGTECH. One copy of the BNR 4 repeat lies at 1156–1167; it reads QYSNNGGIQWHL. Asn1266 carries an N-linked (GlcNAc...) asparagine glycan. Cys1270 and Cys1309 are oxidised to a cystine. The stretch at 1322–1333 is one BNR 5 repeat; that stretch reads QYSHDAGMSWFL. Cys1338 and Cys1347 form a disulfide bridge. Residues 1408–1441 enclose the EGF-like 3 domain; that stretch reads ISEPCPSYCSGHGDCISGVCFCDLGYTAAQGTCV. The BNR 6 repeat unit spans residues 1534–1545; that stretch reads QYSNDNGILWHL. N-linked (GlcNAc...) asparagine glycosylation is present at Asn1599. A disulfide bridge links Cys1632 with Cys1672. A BNR 7 repeat occupies 1685-1696; it reads QYSLNNGKDWHL. A disulfide bond links Cys1701 and Cys1708. N-linked (GlcNAc...) asparagine glycosylation occurs at Asn1749. Positions 1764-1795 constitute an EGF-like 4 domain; that stretch reads LASGCPWMCSGRGICDAGRCVCDRGFGGPYCV. One copy of the BNR 8 repeat lies at 1883 to 1894; it reads QFSISGGITWHL. Asn1920 is a glycosylation site (N-linked (GlcNAc...) asparagine). One copy of the BNR 9 repeat lies at 2042 to 2053; sequence EFSRDFGATWHL. The Zn(2+) site is built by His2060 and His2073. In terms of domain architecture, EGF-like 5 spans 2128 to 2160; it reads IGPQCEEMCNGQGSCINGTKCICDPGYSGPTCK. 3 disulfides stabilise this stretch: Cys2132-Cys2142, Cys2136-Cys2148, and Cys2150-Cys2159. Asn2144 is a glycosylation site (N-linked (GlcNAc...) asparagine). Residue Glu2178 participates in Zn(2+) binding. A disulfide bridge links Cys2194 with Cys2234. The BNR 10 repeat unit spans residues 2249 to 2260; the sequence is QYSLNGGLSWSL. Glu2263 is a Zn(2+) binding site. 2 N-linked (GlcNAc...) asparagine glycosylation sites follow: Asn2268 and Asn2316. Intrachain disulfides connect Cys2347-Cys2386, Cys2392-Cys2558, and Cys2543-Cys2583. 3 residues coordinate Zn(2+): Glu2396, Glu2398, and His2459. Residues 2398–2409 form a BNR 11 repeat; sequence EYSVDLGLSWHP. The 32-residue stretch at 2477-2508 folds into the EGF-like 6 domain; that stretch reads IGDGCIDMCSGHGRCIQGNCVCDEQWGGLYCD. N-linked (GlcNAc...) asparagine glycosylation occurs at Asn2568. 2 BNR repeats span residues 2597 to 2608 and 2777 to 2788; these read EYSVNGGITWNL and QYSTDFGVSWNY. 5 disulfide bridges follow: Cys2793-Cys2800, Cys2856-Cys2866, Cys2860-Cys2871, Cys2873-Cys2882, and Cys2918-Cys2965. In terms of domain architecture, EGF-like 7 spans 2852 to 2883; that stretch reads LGPGCLDNCRGHGDCLREQCICDPGYSGPNCY. Asn2961 carries an N-linked (GlcNAc...) asparagine glycan. One copy of the BNR 14 repeat lies at 2978 to 2989; the sequence is DYSTDGGITWTL. N-linked (GlcNAc...) asparagine glycosylation is found at Asn3015 and Asn3072. One copy of the BNR 15 repeat lies at 3142 to 3154; the sequence is EYTKDARSDSWQL. Cys3159 and Cys3169 are disulfide-bonded. N-linked (GlcNAc...) asparagine glycosylation is present at Asn3184. Residues 3227–3259 form the EGF-like 8 domain; it reads IGEACPKLCSGHGYCTTGAICICDESFQGDDCS. 4 cysteine pairs are disulfide-bonded: Cys3231–Cys3241, Cys3235–Cys3247, Cys3249–Cys3258, and Cys3295–Cys3345. Residues 3362–3373 form a BNR 16 repeat; it reads QYSVNNGITWHV. N-linked (GlcNAc...) asparagine glycosylation is found at Asn3411 and Asn3438.

This sequence belongs to the reelin family. Oligomer of disulfide-linked homodimers. Post-translationally, N-glycosylated and to a lesser extent also O-glycosylated. Abundantly produced during brain ontogenesis by the Cajal-Retzius cells and other pioneer neurons located in the telencephalic marginal zone and by granule cells of the external granular layer of the cerebellum. In adult brain, preferentially expressed in GABAergic interneurons of prefrontal cortices, temporal cortex, hippocampus and glutamatergic granule cells of cerebellum. Expression is reduced to about 50% in patients with schizophrenia. Also expressed in fetal and adult liver.

The protein resides in the secreted. The protein localises to the extracellular space. Its subcellular location is the extracellular matrix. In terms of biological role, extracellular matrix serine protease secreted by pioneer neurons that plays a role in layering of neurons in the cerebral cortex and cerebellum by coordinating cell positioning during neurodevelopment. Regulates microtubule function in neurons and neuronal migration. Binding to the extracellular domains of lipoprotein receptors VLDLR and LRP8/APOER2 induces tyrosine phosphorylation of DAB1 and modulation of TAU phosphorylation. Affects migration of sympathetic preganglionic neurons in the spinal cord, where it seems to act as a barrier to neuronal migration. Enzymatic activity is important for the modulation of cell adhesion. The polypeptide is Reelin (RELN) (Homo sapiens (Human)).